The chain runs to 363 residues: Mitogen-activated protein kinase 4 (363 aa).

In terms of domain architecture, Protein kinase spans 30-318 (YDLVKVVGFG…AKQVMEHPYF (289 aa)). ATP contacts are provided by residues 36 to 44 (VGFGACGTV) and Lys59. Asp156 functions as the Proton acceptor in the catalytic mechanism. Phosphoserine occurs at positions 186 and 187. The residue at position 190 (Thr190) is a Phosphothreonine; by MKK5. Residues 190-192 (TQY) carry the TQY motif. The residue at position 192 (Tyr192) is a Phosphotyrosine; by MKK5.

The protein belongs to the protein kinase superfamily. CMGC Ser/Thr protein kinase family. MAP kinase subfamily. It depends on Mg(2+) as a cofactor. Dually phosphorylated on Thr-190 and Tyr-192, which activates the enzyme.

It carries out the reaction L-seryl-[protein] + ATP = O-phospho-L-seryl-[protein] + ADP + H(+). The enzyme catalyses L-threonyl-[protein] + ATP = O-phospho-L-threonyl-[protein] + ADP + H(+). Functionally, essential for the two main proliferating life stages, the promastigotes and amastigotes, of the parasite. The protein is Mitogen-activated protein kinase 4 of Leishmania mexicana.